The primary structure comprises 267 residues: Coiled-coil domain-containing protein 90B, mitochondrial (267 aa).

The transit peptide at 1–47 (MKGSQLYRHLSLQGNRLHLHLFQGKKLQLHPSQGHKGTAHRTWKKGF) directs the protein to the mitochondrion. Positions 142 to 175 (LEKSEFATLRAENEKMKIELEHVRQHLLNETNRI) form a coiled coil. A helical transmembrane segment spans residues 244–266 (TVRYMAASVFTCLAIALGFYRLW).

This sequence belongs to the CCDC90 family.

Its subcellular location is the mitochondrion membrane. In Xenopus tropicalis (Western clawed frog), this protein is Coiled-coil domain-containing protein 90B, mitochondrial (ccdc90b).